The following is a 257-amino-acid chain: Small ribosomal subunit protein uS2 (257 aa).

Belongs to the universal ribosomal protein uS2 family.

This chain is Small ribosomal subunit protein uS2, found in Bartonella quintana (strain Toulouse) (Rochalimaea quintana).